A 413-amino-acid chain; its full sequence is Putative competence-damage inducible protein (413 aa).

This sequence belongs to the CinA family.

This chain is Putative competence-damage inducible protein, found in Thermoanaerobacter sp. (strain X514).